The primary structure comprises 627 residues: Transketolase-like protein 2 (627 aa).

Position 39 (His39) interacts with substrate. Residues Ser42, His79, and 125 to 127 (GSL) each bind thiamine diphosphate. Asp157 serves as a coordination point for Mg(2+). Gly158 and Asn187 together coordinate thiamine diphosphate. Residues Asn187 and Leu189 each coordinate Mg(2+). Residues Lys249 and His263 each coordinate thiamine diphosphate. The substrate site is built by His263, Arg323, and Ser350. Thiamine diphosphate is bound by residues Glu371 and Phe397. Glu371 acts as the Proton donor in catalysis. 2 residues coordinate substrate: His421 and Asp429. Gln433 serves as a coordination point for thiamine diphosphate. A substrate-binding site is contributed by Arg479.

The protein belongs to the transketolase family. As to quaternary structure, homodimer. The cofactor is Mg(2+). It depends on Ca(2+) as a cofactor. Mn(2+) is required as a cofactor. Requires Co(2+) as cofactor. Thiamine diphosphate serves as cofactor.

The enzyme catalyses D-sedoheptulose 7-phosphate + D-glyceraldehyde 3-phosphate = aldehydo-D-ribose 5-phosphate + D-xylulose 5-phosphate. Functionally, plays an essential role in total transketolase activity and cell proliferation in cancer cells; after transfection with anti-TKTL1 siRNA, total transketolase activity dramatically decreases and proliferation was significantly inhibited in cancer cells. Plays a pivotal role in carcinogenesis. In Mus musculus (Mouse), this protein is Transketolase-like protein 2 (Tktl2).